Here is a 79-residue protein sequence, read N- to C-terminus: Acyl carrier protein (79 aa).

The 76-residue stretch at 2–77 folds into the Carrier domain; the sequence is DNIEQRVKKI…LAIDFAKSKA (76 aa). Position 37 is an O-(pantetheine 4'-phosphoryl)serine (S37).

Belongs to the acyl carrier protein (ACP) family. In terms of processing, 4'-phosphopantetheine is transferred from CoA to a specific serine of apo-ACP by AcpS. This modification is essential for activity because fatty acids are bound in thioester linkage to the sulfhydryl of the prosthetic group.

It localises to the cytoplasm. It participates in lipid metabolism; fatty acid biosynthesis. Carrier of the growing fatty acid chain in fatty acid biosynthesis. The protein is Acyl carrier protein of Polynucleobacter necessarius subsp. necessarius (strain STIR1).